A 316-amino-acid polypeptide reads, in one-letter code: Bifunctional riboflavin kinase/FMN adenylyltransferase (316 aa).

The protein belongs to the RibF family.

It carries out the reaction riboflavin + ATP = FMN + ADP + H(+). The catalysed reaction is FMN + ATP + H(+) = FAD + diphosphate. It functions in the pathway cofactor biosynthesis; FAD biosynthesis; FAD from FMN: step 1/1. It participates in cofactor biosynthesis; FMN biosynthesis; FMN from riboflavin (ATP route): step 1/1. Functionally, catalyzes the phosphorylation of riboflavin to FMN followed by the adenylation of FMN to FAD. The chain is Bifunctional riboflavin kinase/FMN adenylyltransferase (ribC) from Bacillus subtilis (strain 168).